A 349-amino-acid chain; its full sequence is Phosphoribosylformylglycinamidine cyclo-ligase (349 aa).

This sequence belongs to the AIR synthase family.

Its subcellular location is the cytoplasm. The catalysed reaction is 2-formamido-N(1)-(5-O-phospho-beta-D-ribosyl)acetamidine + ATP = 5-amino-1-(5-phospho-beta-D-ribosyl)imidazole + ADP + phosphate + H(+). It functions in the pathway purine metabolism; IMP biosynthesis via de novo pathway; 5-amino-1-(5-phospho-D-ribosyl)imidazole from N(2)-formyl-N(1)-(5-phospho-D-ribosyl)glycinamide: step 2/2. In Bordetella avium (strain 197N), this protein is Phosphoribosylformylglycinamidine cyclo-ligase.